We begin with the raw amino-acid sequence, 302 residues long: MRIVLITGISGSGKSVALNALEDAGYYCVDNLPPHVLPELARYLDEAGQRRLAVAIDARSSASLDEMPGLIRSLSREHDLRVLFLNASTQALIQRFSETRRRHPLSGSPSHDANVGLLSSLEEAIERERELVAPLAEFGHQIDTSTLRANVLRTWVKRFIEQNSNDLMLMFESFGFKRGVPLDADLMFDVRALPNPYYDHELRPLTGLDQPVIAFLDALPIVHQMIDDIHAFLMKWLPHFREDNRSYLTVAIGCTGGQHRSVFIAETLAARFASAANVIVRHRDAPVDVDASSRLVTEVDRP.

Position 8–15 (8–15 (GISGSGKS)) interacts with ATP. 57 to 60 (DARS) contributes to the GTP binding site.

It belongs to the RapZ-like family.

Its function is as follows. Displays ATPase and GTPase activities. This is Nucleotide-binding protein Bmul_0520/BMULJ_02739 from Burkholderia multivorans (strain ATCC 17616 / 249).